The following is a 538-amino-acid chain: Putative cysteine ligase BshC (538 aa).

Residues 460–484 are a coiled coil; it reads KINEQIELLERMLKRNVEKKHEVEL.

The protein belongs to the BshC family.

Its function is as follows. Involved in bacillithiol (BSH) biosynthesis. May catalyze the last step of the pathway, the addition of cysteine to glucosamine malate (GlcN-Mal) to generate BSH. In Bacillus cereus (strain ATCC 10987 / NRS 248), this protein is Putative cysteine ligase BshC.